Here is a 107-residue protein sequence, read N- to C-terminus: Multidrug resistance protein mmr (107 aa).

The next 4 membrane-spanning stretches (helical) occupy residues 2–19 (TYLF…ATSL), 29–51 (LWPT…VSIS), 58–80 (VAYA…LFLG), and 84–106 (SVTK…LTGA).

It belongs to the drug/metabolite transporter (DMT) superfamily. Small multidrug resistance (SMR) (TC 2.A.7.1) family. Mmr subfamily.

It localises to the cell membrane. Its function is as follows. Multidrug efflux pump. Confers resistance to tetraphenylphosphonium (TPP), erythromycin, ethidium bromide, acriflavine, safranin O and pyronin Y. The chain is Multidrug resistance protein mmr (mmr) from Mycolicibacterium paratuberculosis (strain ATCC BAA-968 / K-10) (Mycobacterium paratuberculosis).